The following is a 614-amino-acid chain: MAEFNIDELLKNVLEDPSTEISEETLKQLYQRTNPYKQFKNDSRVAFCSFTNLREQYIRRLIMTSLIGYVFKALQEWMPSYSKPTHTTKTLLSELITLVDTLKQETNDVPSESVVNTILAIADSCKTQTQKSKEAKTTIDSFLREHFVFDPNLHAQSAYTCASTNADTSASTNADTSASTNASINADTNVDTCASTNASTNVDTNASINASTNASTNVDTNASTNASINADTNVDTCASTNASTNVDTNASINASTNASTNVDTNADINANTNADINANINANTEYTDLTDPERIPLHIMQKTLNVPNELQADIDAITQTPQGYRAAAHILQNIELHQSVKHMLENPRAFKPILFNTKITRYLSQHIPPQDTFYKWNYYIEDNYEELRAATESIYPEKPDLEFAFIIYDVVDSSNQQKIDEFYYKYKDQIFSEVSSIQLGNWTLLGSFKANRERYNYFNQNNEVIKRILDRHEEDLKIGKEILRNTIYHKKAKNIQETGPDAPGLSIYNSTFHTDSGIKGLLSFKELKNLEKASGNVKKAREYDFIDECEEKIKQLLSKENLTSDEKSELIKTKKQLDNALEMLNVPDDTIRVDMWVNNNNKLEKEILYTKAEL.

31 tandem repeats follow at residues 161–164 (CAST), 165–168 (NADT), 169–172 (SAST), 173–176 (NADT), 177–180 (SAST), 181–184 (NASI), 185–188 (NADT), 189–192 (NVDT), 193–196 (CAST), 197–200 (NAST), 201–204 (NVDT), 205–208 (NASI), 209–212 (NAST), 213–216 (NAST), 217–220 (NVDT), 221–224 (NAST), 225–228 (NASI), 229–232 (NADT), 233–236 (NVDT), 237–240 (CAST), 241–244 (NAST), 245–248 (NVDT), 249–252 (NASI), 253–256 (NAST), 257–260 (NAST), 261–264 (NVDT), 265–268 (NADI), 269–272 (NANT), 273–276 (NADI), 277–280 (NANI), and 281–284 (NANT). The segment at 161-284 (CASTNADTSA…DINANINANT (124 aa)) is 28 X 4 AA tandem repeats of [CNS]-[AV]-[DNS]-[IT].

It belongs to the asfivirus B602L family.

The protein localises to the host cytoplasm. Plays an essential role in the assembly of the icosahedral capsid of the virus. Allows the assembly of 3 molecules of hexon protein p72 and formation of a thermostable trimer. This is Protein B602L from African swine fever virus (isolate Tick/Malawi/Lil 20-1/1983) (ASFV).